The following is a 163-amino-acid chain: Cyclic pyranopterin monophosphate synthase (163 aa).

Substrate is bound by residues 79–81 (LCH) and 118–119 (ME). Asp133 is a catalytic residue.

Belongs to the MoaC family. As to quaternary structure, homohexamer; trimer of dimers.

It carries out the reaction (8S)-3',8-cyclo-7,8-dihydroguanosine 5'-triphosphate = cyclic pyranopterin phosphate + diphosphate. It functions in the pathway cofactor biosynthesis; molybdopterin biosynthesis. Catalyzes the conversion of (8S)-3',8-cyclo-7,8-dihydroguanosine 5'-triphosphate to cyclic pyranopterin monophosphate (cPMP). The polypeptide is Cyclic pyranopterin monophosphate synthase (Nocardioides sp. (strain ATCC BAA-499 / JS614)).